Consider the following 75-residue polypeptide: Anionic peptide (75 aa).

The signal sequence occupies residues 1-24 (MVSKSLIVLLLVSVLVSTFYTSEA).

Belongs to the non-disulfide-bridged peptide (NDBP) superfamily. Expressed by the venom gland.

It localises to the secreted. The protein is Anionic peptide of Tityus discrepans (Venezuelan scorpion).